The sequence spans 511 residues: MMKMRWLSAAVMLTLYTSSSWAFSIDDVAKQAQSLAGKGYEAPKSNLPSVFRDMKYADYQQIQFNHDKAYWNNLKTPFKLEFYHQGMYFDTPVKINEVTATAVKRIKYSPDYFTFGDVRHDKDTVKDLGFAGFKVLYPINSKDKNDEIVSMLGASYFRVIGAGQVYGLSARGLAIDTALPSGEEFPRFKEFWIERPKPTDKRLTIYALLDSPRATGAYKFVVMPGRDTVVDVQSKIYLRDKVGKLGVAPLTSMFLFGPNQPSPANNYRPELHDSNGLSIHAGNGEWIWRPLNNPKHLAVSSFSMENPQGFGLLQRGRDFSRFEDLDDRYDLRPSAWVTPKGEWGKGSVELVEIPTNDETNDNIVAYWTPDQLPEPGKEMNFKYTITFSRDEDKLHAPDNAWVQQTRRSTGDVKQSNLIRQPDGTIAFVVDFTGAEMKKLPEDTPVTAQTSIGDNGEIVESTVRYNPVTKGWRLVMRVKVKDAKKTTEMRAALVNADQTLSETWSYQLPANE.

An N-terminal signal peptide occupies residues 1-22; it reads MMKMRWLSAAVMLTLYTSSSWA.

Belongs to the OpgD/OpgG family.

It localises to the periplasm. It participates in glycan metabolism; osmoregulated periplasmic glucan (OPG) biosynthesis. Its function is as follows. Involved in the biosynthesis of osmoregulated periplasmic glucans (OPGs). The protein is Glucans biosynthesis protein G of Shigella dysenteriae serotype 1 (strain Sd197).